Consider the following 543-residue polypeptide: Myotubularin-related protein 9-like (543 aa).

Positions 124–502 (AWHFHPPECY…QSLRLWQGLF (379 aa)) constitute a Myotubularin phosphatase domain.

The protein belongs to the protein-tyrosine phosphatase family. Non-receptor class myotubularin subfamily.

Functionally, probable pseudophosphatase. In Bos taurus (Bovine), this protein is Myotubularin-related protein 9-like.